The primary structure comprises 828 residues: Mediator of RNA polymerase II transcription subunit 16 (828 aa).

5 WD repeats span residues 68–107 (GHQE…ANSW), 199–241 (RCRV…VSEK), 264–308 (DKFP…LPLN), 622–663 (NQGS…CLPV), and 777–816 (FPTE…TCLC).

The protein belongs to the Mediator complex subunit 16 family. As to quaternary structure, component of the Mediator complex.

It is found in the nucleus. Functionally, component of the Mediator complex, a coactivator involved in the regulated transcription of nearly all RNA polymerase II-dependent genes. Mediator functions as a bridge to convey information from gene-specific regulatory proteins to the basal RNA polymerase II transcription machinery. Mediator is recruited to promoters by direct interactions with regulatory proteins and serves as a scaffold for the assembly of a functional preinitiation complex with RNA polymerase II and the general transcription factors. In Xenopus tropicalis (Western clawed frog), this protein is Mediator of RNA polymerase II transcription subunit 16 (med16).